The following is a 308-amino-acid chain: Putative glutamine amidotransferase Rv2859c (308 aa).

The segment at 1–62 is disordered; it reads MDLSASRSDG…ASPRLRSPLG (62 aa). Low complexity-rich tracts occupy residues 13-24, 31-42, and 49-61; these read PLRPASPRLRSP and PLRPASPRLRSPL. Residues 78 to 301 enclose the Glutamine amidotransferase type-1 domain; that stretch reads RTGVWDIPAG…VDAASGYAGR (224 aa). C177 (nucleophile) is an active-site residue. Residues H277 and E279 contribute to the active site. Residue K289 forms an Isoglutamyl lysine isopeptide (Lys-Gln) (interchain with Q-Cter in protein Pup) linkage.

This chain is Putative glutamine amidotransferase Rv2859c, found in Mycobacterium tuberculosis (strain ATCC 25618 / H37Rv).